The following is a 493-amino-acid chain: Probable phospho-2-dehydro-3-deoxyheptonate aldolase, chloroplastic (493 aa).

The transit peptide at 1–58 (MAMSNTSALASKLLPSCKPHQPTLTFFSPSTTCQKKPRSSRPISAAVHVTQPPKTPIS) directs the protein to the chloroplast.

This sequence belongs to the class-II DAHP synthase family.

The protein resides in the plastid. Its subcellular location is the chloroplast. It catalyses the reaction D-erythrose 4-phosphate + phosphoenolpyruvate + H2O = 7-phospho-2-dehydro-3-deoxy-D-arabino-heptonate + phosphate. The protein operates within metabolic intermediate biosynthesis; chorismate biosynthesis; chorismate from D-erythrose 4-phosphate and phosphoenolpyruvate: step 1/7. In Catharanthus roseus (Madagascar periwinkle), this protein is Probable phospho-2-dehydro-3-deoxyheptonate aldolase, chloroplastic (DHS1).